A 78-amino-acid polypeptide reads, in one-letter code: Small nuclear ribonucleoprotein F (78 aa).

Residues 7–78 form the Sm domain; sequence NPKPFLQGLI…NVLWVGESTV (72 aa).

It belongs to the snRNP Sm proteins family. SmF/LSm6 subfamily. Belongs to the 40S cdc5-associated complex (or cwf complex), a spliceosome sub-complex reminiscent of a late-stage spliceosome composed of the U2, U5 and U6 snRNAs and at least brr2, cdc5, cwf2/prp3, cwf3/syf1, cwf4/syf3, cwf5/ecm2, spp42/cwf6, cwf7/spf27, cwf8, cwf9, cwf10, cwf11, cwf12, prp45/cwf13, cwf14, cwf15, cwf16, cwf17, cwf18, cwf19, cwf20, cwf21, cwf22, cwf23, cwf24, cwf25, cwf26, cyp7/cwf27, cwf28, cwf29/ist3, lea1, msl1, prp5/cwf1, prp10, prp12/sap130, prp17, prp22, sap61, sap62, sap114, sap145, slu7, smb1, smd1, smd3, smf1, smg1 and syf2.

It localises to the nucleus. The protein resides in the cytoplasm. Plays a role in pre-mRNA splicing as a core component of the spliceosomal U1, U2, U4 and U5 small nuclear ribonucleoproteins (snRNPs), the building blocks of the spliceosome. This is Small nuclear ribonucleoprotein F (smf1) from Schizosaccharomyces pombe (strain 972 / ATCC 24843) (Fission yeast).